The sequence spans 26 residues: DHAGTVSKAHKQHDVNSVLYKVYEDI.

This sequence belongs to the tyrosinase family. Hemocyanin subfamily. In terms of tissue distribution, hemolymph.

It localises to the secreted. It is found in the extracellular space. Its function is as follows. Hemocyanins are copper-containing oxygen carriers occurring freely dissolved in the hemolymph of many mollusks and arthropods. This chain is Hemocyanin subunit 5, found in Maja squinado (Mediterranean spider crab).